Here is a 130-residue protein sequence, read N- to C-terminus: uncharacterized protein (130 aa).

2 helical membrane-spanning segments follow: residues phenylalanine 35–leucine 57 and isoleucine 72–leucine 91.

The protein localises to the cell membrane. This is an uncharacterized protein from Pasteurella multocida (strain Pm70).